Consider the following 92-residue polypeptide: Small ribosomal subunit protein uS19 (92 aa).

Belongs to the universal ribosomal protein uS19 family.

Functionally, protein S19 forms a complex with S13 that binds strongly to the 16S ribosomal RNA. This chain is Small ribosomal subunit protein uS19, found in Nostoc punctiforme (strain ATCC 29133 / PCC 73102).